Reading from the N-terminus, the 235-residue chain is Exosome complex component RRP46 (235 aa).

The segment covering Met1–Ala13 has biased composition (basic and acidic residues). Residues Met1 to Pro24 are disordered. Ser20 carries the post-translational modification Phosphoserine.

It belongs to the RNase PH family. Homodimer. Component of the RNA exosome core complex (Exo-9), composed of EXOSC1, EXOSC2, EXOSC3, EXOSC4, EXOSC5, EXOSC6, EXOSC7, EXOSC8 and EXOSC9; within the complex interacts with EXOSC3, EXOSC8, and EXOSC9. The catalytically inactive RNA exosome core complex (Exo-9) associates with the catalytic subunit EXOSC10/RRP6. Exo-9 may associate with DIS3 to form the nucleolar exosome complex, or DIS3L to form the cytoplasmic exosome complex. Exo-9 is formed by a hexameric base ring consisting of the heterodimers EXOSC4-EXOSC9, EXOSC5-EXOSC8 and EXOSC6-EXOSC7, and a cap ring consisting of EXOSC1, EXOSC2 and EXOSC3. The RNA exosome complex associates with cofactors C1D/RRP47, MPHOSPH6/MPP6 and MTREX/MTR4. Interacts with GTPBP1. Interacts with ZC3HAV1. Interacts with DDX17 only in the presence of ZC3HAV1 in an RNA-independent manner. In terms of tissue distribution, highly expressed in a variety of hematopoietic and epithelial tumor cell lines, but not in normal hematopoietic tissues or other normal tissue, with the exception of testis.

The protein localises to the nucleus. Its subcellular location is the nucleolus. It localises to the cytoplasm. Non-catalytic component of the RNA exosome complex which has 3'-&gt;5' exoribonuclease activity and participates in a multitude of cellular RNA processing and degradation events. In the nucleus, the RNA exosome complex is involved in proper maturation of stable RNA species such as rRNA, snRNA and snoRNA, in the elimination of RNA processing by-products and non-coding 'pervasive' transcripts, such as antisense RNA species and promoter-upstream transcripts (PROMPTs), and of mRNAs with processing defects, thereby limiting or excluding their export to the cytoplasm. The RNA exosome may be involved in Ig class switch recombination (CSR) and/or Ig variable region somatic hypermutation (SHM) by targeting AICDA deamination activity to transcribed dsDNA substrates. In the cytoplasm, the RNA exosome complex is involved in general mRNA turnover and specifically degrades inherently unstable mRNAs containing AU-rich elements (AREs) within their 3' untranslated regions, and in RNA surveillance pathways, preventing translation of aberrant mRNAs. It seems to be involved in degradation of histone mRNA. The catalytic inactive RNA exosome core complex of 9 subunits (Exo-9) is proposed to play a pivotal role in the binding and presentation of RNA for ribonucleolysis, and to serve as a scaffold for the association with catalytic subunits and accessory proteins or complexes. In vitro, EXOSC5 does not bind or digest single-stranded RNA and binds to double-stranded DNA without detectable DNase activity. This Homo sapiens (Human) protein is Exosome complex component RRP46 (EXOSC5).